Here is a 565-residue protein sequence, read N- to C-terminus: DNA ligase B (565 aa).

Lys-130 serves as the catalytic N6-AMP-lysine intermediate.

Belongs to the NAD-dependent DNA ligase family. LigB subfamily.

It catalyses the reaction NAD(+) + (deoxyribonucleotide)n-3'-hydroxyl + 5'-phospho-(deoxyribonucleotide)m = (deoxyribonucleotide)n+m + AMP + beta-nicotinamide D-nucleotide.. Catalyzes the formation of phosphodiester linkages between 5'-phosphoryl and 3'-hydroxyl groups in double-stranded DNA using NAD as a coenzyme and as the energy source for the reaction. This is DNA ligase B from Yersinia enterocolitica serotype O:8 / biotype 1B (strain NCTC 13174 / 8081).